Reading from the N-terminus, the 329-residue chain is Biotin synthase (329 aa).

The Radical SAM core domain occupies 38 to 262 (NTIQVSTLLS…IMPHSYIRLS (225 aa)). [4Fe-4S] cluster contacts are provided by Cys53, Cys57, and Cys60. [2Fe-2S] cluster contacts are provided by Cys97, Cys128, Cys188, and Arg260.

It belongs to the radical SAM superfamily. Biotin synthase family. Homodimer. It depends on [4Fe-4S] cluster as a cofactor. The cofactor is [2Fe-2S] cluster.

It catalyses the reaction (4R,5S)-dethiobiotin + (sulfur carrier)-SH + 2 reduced [2Fe-2S]-[ferredoxin] + 2 S-adenosyl-L-methionine = (sulfur carrier)-H + biotin + 2 5'-deoxyadenosine + 2 L-methionine + 2 oxidized [2Fe-2S]-[ferredoxin]. It functions in the pathway cofactor biosynthesis; biotin biosynthesis; biotin from 7,8-diaminononanoate: step 2/2. Functionally, catalyzes the conversion of dethiobiotin (DTB) to biotin by the insertion of a sulfur atom into dethiobiotin via a radical-based mechanism. The sequence is that of Biotin synthase from Acinetobacter baumannii (strain ACICU).